We begin with the raw amino-acid sequence, 185 residues long: Ribosome-recycling factor (185 aa).

The protein belongs to the RRF family.

The protein localises to the cytoplasm. Responsible for the release of ribosomes from messenger RNA at the termination of protein biosynthesis. May increase the efficiency of translation by recycling ribosomes from one round of translation to another. This Campylobacter fetus subsp. fetus (strain 82-40) protein is Ribosome-recycling factor.